The chain runs to 705 residues: Cell cycle serine/threonine-protein kinase CDC5/MSD2 (705 aa).

Residue threonine 23 is modified to Phosphothreonine. The span at 41–53 shows a compositional bias: basic and acidic residues; the sequence is QTKRLDPNNDHHH. A disordered region spans residues 41–63; the sequence is QTKRLDPNNDHHHQPAQKKKREK. The 256-residue stretch at 82 to 337 folds into the Protein kinase domain; the sequence is YHRGHFLGEG…LTEIMDYVWF (256 aa). Residues 88-96 and lysine 110 each bind ATP; that span reads LGEGGFARC. Aspartate 204 (proton acceptor) is an active-site residue. The residue at position 419 (serine 419) is a Phosphoserine. One can recognise a POLO box 1 domain in the interval 513-595; the sequence is IVTKWVDYSN…VDFFAKYMKA (83 aa). The Zn(2+) site is built by glutamate 553, histidine 569, histidine 609, and aspartate 612. The region spanning 614–700 is the POLO box 2 domain; that stretch reads FLRRYTRYKP…IKEGLKQKST (87 aa).

The protein belongs to the protein kinase superfamily. Ser/Thr protein kinase family. CDC5/Polo subfamily. Interacts with CDC48; the interaction is likely to result in CDC5 degradation. Interacts with CSA1.

Its subcellular location is the cytoplasm. It is found in the cytoskeleton. It localises to the microtubule organizing center. The protein localises to the spindle pole body. It carries out the reaction L-seryl-[protein] + ATP = O-phospho-L-seryl-[protein] + ADP + H(+). The enzyme catalyses L-threonyl-[protein] + ATP = O-phospho-L-threonyl-[protein] + ADP + H(+). Functionally, protein kinase required for the cell cycle where it is involved in mitotic exit. A component of the fear (CDC14 early anaphase release) network which promotes CDC14 release from the nucleolus during early anaphase. Phosphorylates SCC1/MCD1 and NET1. The sequence is that of Cell cycle serine/threonine-protein kinase CDC5/MSD2 (CDC5) from Saccharomyces cerevisiae (strain ATCC 204508 / S288c) (Baker's yeast).